Reading from the N-terminus, the 201-residue chain is Potassium-transporting ATPase KdpC subunit (201 aa).

The chain crosses the membrane as a helical span at residues 7-27 (PAIVLLLVLTAITGLAYPLAM).

This sequence belongs to the KdpC family. The system is composed of three essential subunits: KdpA, KdpB and KdpC.

It localises to the cell inner membrane. Its function is as follows. Part of the high-affinity ATP-driven potassium transport (or Kdp) system, which catalyzes the hydrolysis of ATP coupled with the electrogenic transport of potassium into the cytoplasm. This subunit acts as a catalytic chaperone that increases the ATP-binding affinity of the ATP-hydrolyzing subunit KdpB by the formation of a transient KdpB/KdpC/ATP ternary complex. This Bradyrhizobium diazoefficiens (strain JCM 10833 / BCRC 13528 / IAM 13628 / NBRC 14792 / USDA 110) protein is Potassium-transporting ATPase KdpC subunit.